We begin with the raw amino-acid sequence, 643 residues long: Arginine--tRNA ligase, mitochondrial (643 aa).

Residues 188–198 carry the 'HIGH' region motif; it reads PNIAKPFHAGH.

Belongs to the class-I aminoacyl-tRNA synthetase family.

Its subcellular location is the mitochondrion matrix. The catalysed reaction is tRNA(Arg) + L-arginine + ATP = L-arginyl-tRNA(Arg) + AMP + diphosphate. This Saccharomyces cerevisiae (strain ATCC 204508 / S288c) (Baker's yeast) protein is Arginine--tRNA ligase, mitochondrial (MSR1).